We begin with the raw amino-acid sequence, 246 residues long: MDSLDPRNRPVRKVFTTRAGGVSQSPYASFNLGDHVGDDPQAVASNRNRLADIIGLSPDKVVYMEQIHSNTVTVIDEAPADGQAVEATDALVTTQRGLALAVLVADCVPVLLSDTDAGVIAAVHAGRMGARNGIVAKTIAKMEELGAKPSRIHALMGAAASGANYEVPEAMARDVEAKLPGSIARTTKGTTGLDIRAGLLRQMLSLGVQMIDSDPRCTIEDEDLFSYRREGTTGRQAGVVWLPKEA.

3 residues coordinate Zn(2+): His-68, Cys-107, and His-124.

The protein belongs to the purine nucleoside phosphorylase YfiH/LACC1 family. As to quaternary structure, homodimer. Requires Cu(2+) as cofactor. It depends on Zn(2+) as a cofactor.

The catalysed reaction is adenosine + phosphate = alpha-D-ribose 1-phosphate + adenine. The enzyme catalyses S-methyl-5'-thioadenosine + phosphate = 5-(methylsulfanyl)-alpha-D-ribose 1-phosphate + adenine. It catalyses the reaction inosine + phosphate = alpha-D-ribose 1-phosphate + hypoxanthine. It carries out the reaction adenosine + H2O + H(+) = inosine + NH4(+). Purine nucleoside enzyme that catalyzes the phosphorolysis of adenosine and inosine nucleosides, yielding D-ribose 1-phosphate and the respective free bases, adenine and hypoxanthine. Also catalyzes the phosphorolysis of S-methyl-5'-thioadenosine into adenine and S-methyl-5-thio-alpha-D-ribose 1-phosphate. Also has adenosine deaminase activity. This is Purine nucleoside phosphorylase Cgl2154/cg2365 from Corynebacterium glutamicum (strain ATCC 13032 / DSM 20300 / JCM 1318 / BCRC 11384 / CCUG 27702 / LMG 3730 / NBRC 12168 / NCIMB 10025 / NRRL B-2784 / 534).